The following is a 445-amino-acid chain: Trimethylamine monooxygenase (445 aa).

The FAD site is built by serine 14, glutamate 39, glutamine 41, leucine 47, tryptophan 48, and histidine 64. The NADP(+) site is built by tryptophan 72 and asparagine 74. The FAD site is built by asparagine 74 and valine 127. Threonine 204, serine 205, serine 207, and arginine 228 together coordinate NADP(+). FAD contacts are provided by glutamine 317 and threonine 320. Arginine 411 lines the NADP(+) pocket.

This sequence belongs to the FMO family. Requires FAD as cofactor.

The enzyme catalyses trimethylamine + NADPH + O2 = trimethylamine N-oxide + NADP(+) + H2O. Catalyzes the oxidation of trimethylamine (TMA) to produce trimethylamine N-oxide (TMAO). In vitro, has a broad substrate specificity, oxidizing many nitrogen- and sulfur-containing compounds, including dimethylamine (DMA), dimethylsulfide (DMS) and dimethylsulfoxide (DMSO). The chain is Trimethylamine monooxygenase from Roseovarius sp. (strain 217).